The primary structure comprises 427 residues: 3-phosphoshikimate 1-carboxyvinyltransferase (427 aa).

Residues lysine 20, serine 21, and arginine 25 each contribute to the 3-phosphoshikimate site. A phosphoenolpyruvate-binding site is contributed by lysine 20. Residues glycine 92 and arginine 120 each coordinate phosphoenolpyruvate. Positions 166, 168, 312, and 339 each coordinate 3-phosphoshikimate. Glutamine 168 is a binding site for phosphoenolpyruvate. Catalysis depends on aspartate 312, which acts as the Proton acceptor. Phosphoenolpyruvate-binding residues include arginine 343 and arginine 385.

Belongs to the EPSP synthase family. As to quaternary structure, monomer.

Its subcellular location is the cytoplasm. The enzyme catalyses 3-phosphoshikimate + phosphoenolpyruvate = 5-O-(1-carboxyvinyl)-3-phosphoshikimate + phosphate. Its pathway is metabolic intermediate biosynthesis; chorismate biosynthesis; chorismate from D-erythrose 4-phosphate and phosphoenolpyruvate: step 6/7. Functionally, catalyzes the transfer of the enolpyruvyl moiety of phosphoenolpyruvate (PEP) to the 5-hydroxyl of shikimate-3-phosphate (S3P) to produce enolpyruvyl shikimate-3-phosphate and inorganic phosphate. This Streptococcus pyogenes serotype M28 (strain MGAS6180) protein is 3-phosphoshikimate 1-carboxyvinyltransferase.